The sequence spans 529 residues: hal-like protein DDB_G0273787/DDB_G0273081 (529 aa).

A cross-link (5-imidazolinone (Ala-Gly)) is located at residues 151–153 (ASG). Serine 152 carries the 2,3-didehydroalanine (Ser) modification.

This sequence belongs to the PAL/histidase family. In terms of processing, contains an active site 4-methylidene-imidazol-5-one (MIO), which is formed autocatalytically by cyclization and dehydration of residues Ala-Ser-Gly.

The protein resides in the cytoplasm. It catalyses the reaction L-histidine = trans-urocanate + NH4(+). It functions in the pathway amino-acid degradation; L-histidine degradation into L-glutamate; N-formimidoyl-L-glutamate from L-histidine: step 1/3. The sequence is that of hal-like protein DDB_G0273787/DDB_G0273081 from Dictyostelium discoideum (Social amoeba).